Consider the following 183-residue polypeptide: Dual-action ribosomal maturation protein DarP (183 aa).

This sequence belongs to the DarP family.

It is found in the cytoplasm. Functionally, member of a network of 50S ribosomal subunit biogenesis factors which assembles along the 30S-50S interface, preventing incorrect 23S rRNA structures from forming. Promotes peptidyl transferase center (PTC) maturation. This chain is Dual-action ribosomal maturation protein DarP, found in Klebsiella pneumoniae (strain 342).